Here is a 124-residue protein sequence, read N- to C-terminus: Ribonuclease pancreatic (124 aa).

Residues Lys7 and Arg10 each contribute to the substrate site. Residue His12 is the Proton acceptor of the active site. Cystine bridges form between Cys26/Cys84, Cys40/Cys95, Cys58/Cys110, and Cys65/Cys72. N-linked (GlcNAc...) asparagine glycosylation occurs at Asn34. Residues Lys41–Thr45, Lys66, and Arg85 contribute to the substrate site. The Proton donor role is filled by His119.

The protein belongs to the pancreatic ribonuclease family. Monomer. Interacts with and forms tight 1:1 complexes with RNH1. Dimerization of two such complexes may occur. Interaction with RNH1 inhibits this protein. Pancreas.

The protein resides in the secreted. It carries out the reaction an [RNA] containing cytidine + H2O = an [RNA]-3'-cytidine-3'-phosphate + a 5'-hydroxy-ribonucleotide-3'-[RNA].. The catalysed reaction is an [RNA] containing uridine + H2O = an [RNA]-3'-uridine-3'-phosphate + a 5'-hydroxy-ribonucleotide-3'-[RNA].. Its function is as follows. Endonuclease that catalyzes the cleavage of RNA on the 3' side of pyrimidine nucleotides. Acts on single-stranded and double-stranded RNA. The protein is Ribonuclease pancreatic (RNASE1) of Mesocricetus auratus (Golden hamster).